The sequence spans 488 residues: Ammonium transporter Rh type C-like 2 (488 aa).

Residues 1–21 (MGNCFGSRGICDRPKNTNIRL) lie on the Cytoplasmic side of the membrane. Residues 22–42 (SLPAVCFVWQVSMIILFGVFV) form a helical membrane-spanning segment. Residues 43-73 (RYNEEADTNWVYTKKEKNITSDIENDFYFRY) lie on the Extracellular side of the membrane. Asn60 carries N-linked (GlcNAc...) asparagine glycosylation. A helical transmembrane segment spans residues 74–94 (PSFQDVHVMIFVGFGFLMTFL). Residues 95-98 (KRYS) lie on the Cytoplasmic side of the membrane. The chain crosses the membrane as a helical span at residues 99–119 (FGAVGFNFLIAAFGLQWALLM). The Extracellular segment spans residues 120-139 (QGWFSPLGDDGKIKIGIENL). Residues 140 to 160 (INADFCVASCLIAYGAVLGKV) form a helical membrane-spanning segment. Over 161-162 (SP) the chain is Cytoplasmic. The chain crosses the membrane as a helical span at residues 163-183 (VQLLVMTLFGITLYAVEEFII). The Extracellular portion of the chain corresponds to 184-191 (LRVLNAKD). A helical transmembrane segment spans residues 192–214 (AGGSMVIHTFGAYYGLSISRVLY). Residues 215–232 (RPNLNKSKHMNGSVYHSD) are Cytoplasmic-facing. A helical transmembrane segment spans residues 233-253 (VFAMIGTLFLWMFWPSFNSAI). Residues 254–264 (CNHGDGQHRAA) are Extracellular-facing. Residues 265-285 (INTYLALASTVLTTVAISSMF) form a helical membrane-spanning segment. The Cytoplasmic segment spans residues 286–298 (EKTGKLDMVHIQN). Residues 299–319 (STLAGGVAVGTAAEFMLMPYG) form a helical membrane-spanning segment. Residue Ser320 is a topological domain, extracellular. Residues 321 to 341 (LIVGFFCGIISTLGYIYLTPF) traverse the membrane as a helical segment. The Cytoplasmic segment spans residues 342-356 (LEERLKIQDTCGIHN). Residues 357 to 377 (LHAMPGVIGGIVGAISAAAAS) form a helical membrane-spanning segment. Residues 378-409 (KEVYGDLGLKNIFSIEGSNVTRLPTVQGGYQA) are Extracellular-facing. A helical transmembrane segment spans residues 410–430 (AALCVALCFGIGGGTFVGLVL). Residues 431–488 (KLPIWGDPADEHCFNDEMYWEVPEDEESIIPPVLSYNNHMIPNNKHEEMRETNFAEQS) lie on the Cytoplasmic side of the membrane.

It belongs to the ammonium transporter (TC 2.A.49) family. Rh subfamily. Homotrimer. As to expression, at larval stages, expressed only in the yolk sac and gill. However, the kidney and the gills are major sites of expression in adults.

The protein localises to the apical cell membrane. Its function is as follows. Functions as an ammonia transporter. May play a role in the elimination of ammonia in the gill. This chain is Ammonium transporter Rh type C-like 2 (rhcgl2), found in Danio rerio (Zebrafish).